The sequence spans 150 residues: 3-hydroxyacyl-[acyl-carrier-protein] dehydratase FabZ (150 aa).

Residue His52 is part of the active site.

The protein belongs to the thioester dehydratase family. FabZ subfamily.

The protein localises to the cytoplasm. It catalyses the reaction a (3R)-hydroxyacyl-[ACP] = a (2E)-enoyl-[ACP] + H2O. In terms of biological role, involved in unsaturated fatty acids biosynthesis. Catalyzes the dehydration of short chain beta-hydroxyacyl-ACPs and long chain saturated and unsaturated beta-hydroxyacyl-ACPs. The polypeptide is 3-hydroxyacyl-[acyl-carrier-protein] dehydratase FabZ (Cupriavidus metallidurans (strain ATCC 43123 / DSM 2839 / NBRC 102507 / CH34) (Ralstonia metallidurans)).